Reading from the N-terminus, the 428-residue chain is Histidinol dehydrogenase (428 aa).

3 residues coordinate NAD(+): tyrosine 127, glutamine 185, and asparagine 208. Serine 232, glutamine 254, and histidine 257 together coordinate substrate. Glutamine 254 and histidine 257 together coordinate Zn(2+). Catalysis depends on proton acceptor residues glutamate 321 and histidine 322. The substrate site is built by histidine 322, aspartate 355, glutamate 409, and histidine 414. Residue aspartate 355 coordinates Zn(2+). Histidine 414 contacts Zn(2+).

The protein belongs to the histidinol dehydrogenase family. Zn(2+) serves as cofactor.

It catalyses the reaction L-histidinol + 2 NAD(+) + H2O = L-histidine + 2 NADH + 3 H(+). It participates in amino-acid biosynthesis; L-histidine biosynthesis; L-histidine from 5-phospho-alpha-D-ribose 1-diphosphate: step 9/9. Its function is as follows. Catalyzes the sequential NAD-dependent oxidations of L-histidinol to L-histidinaldehyde and then to L-histidine. This Pasteurella multocida (strain Pm70) protein is Histidinol dehydrogenase.